Here is a 508-residue protein sequence, read N- to C-terminus: H/ACA ribonucleoprotein complex subunit 4 (508 aa).

The tract at residues 1-29 is disordered; sequence MADVEVRKEKKKKKIKEEPLDGDDIGTLQ. Asp-123 functions as the Nucleophile in the catalytic mechanism. A PUA domain is found at 294-369; it reads HKRIIMKDSS…VVAKIKRVIM (76 aa). The tract at residues 423–508 is disordered; the sequence is AAQEVSPTNG…KDRDRDEAQE (86 aa). Ser-442 is modified (phosphoserine). Over residues 442–457 the composition is skewed to low complexity; sequence STSSVEETAAAAVSEE. Thr-443 carries the post-translational modification Phosphothreonine. Phosphoserine is present on residues Ser-444 and Ser-445. Phosphothreonine is present on Thr-449. Ser-455 carries the phosphoserine modification. Thr-458 is modified (phosphothreonine). A compositionally biased stretch (acidic residues) spans 475 to 485; sequence EAPEAAEEEAE. The span at 499 to 508 shows a compositional bias: basic and acidic residues; it reads KDRDRDEAQE.

It belongs to the pseudouridine synthase TruB family. As to quaternary structure, component of the box H/ACA small nucleolar ribonucleoprotein (H/ACA snoRNP) complex consisting of Nop60B, Gar1, NPH2 and Nop10, and associated with H/ACA-type snoRNAs. In terms of tissue distribution, expressed at higher levels in females than in males. Expressed almost exclusively in females with high levels of expression in the ovary.

The protein resides in the nucleus. Its subcellular location is the nucleolus. It catalyses the reaction a uridine in RNA = a pseudouridine in RNA. Catalytic subunit of the box H/ACA small nucleolar ribonucleoprotein (H/ACA snoRNP) complex, which catalyzes pseudouridylation of rRNA. This involves the isomerization of uridine such that the ribose is subsequently attached to C5, instead of the normal N1. Pseudouridine ('psi') residues may serve to stabilize the conformation of rRNAs. Required for ribosome biogenesis; plays a central role in ribosomal RNA processing. H/ACA snoRNP complex-dependent ribosome biogenesis is important in female germline cell differentiation during oogenesis. Essential for viability and female fertility. Required for maintenance of the germline stem cell lineage during spermatogenesis. This Drosophila melanogaster (Fruit fly) protein is H/ACA ribonucleoprotein complex subunit 4.